The following is a 205-amino-acid chain: Basonuclin zinc finger protein homolog (205 aa).

2 consecutive C2H2-type zinc fingers follow at residues 107 to 130 and 135 to 164; these read VACD…SAVH and HTCT…PKLH. Residues 145-168 form a disordered region; that stretch reads QFSSRRSRNRHSSNNNPKLHMPES.

Expressed in the VA and VB motor neurons and at lower levels in the SABV neuron pair.

The protein localises to the nucleus. Its function is as follows. Probable transcription factor. Involved in motor neuron fate determination and maintenance, acting as a transcriptional repressor to counteract gene activation by transcription factor unc-3 in a subset of motor neurons. Required throughout development to repress transcription by unc-3, probably acting by binding to specific promoter elements. Represses expression of DA and DB motor neuron-specific effector genes, such as unc-129 and unc-53, in VA and VB motor neurons. In Caenorhabditis elegans, this protein is Basonuclin zinc finger protein homolog.